Here is a 516-residue protein sequence, read N- to C-terminus: MNISLNTCILILKEHHLLKSSAVQDTVQTIMEAVSYDSRDVQNNSLFFCKGAGFRPTYLTMAKENGAIAYVAEQPYPEGTGMHALIVRNVSKAMALLSAAFYSFPQDDLFLVGFTGTKGKTTSAYFLKGMLDQLNGGRTALLSSVDNILGPAPEDTFKSSLTTPESLDLFRDMRRAVDNGMTHMVMEVSSQAYKKSRVFGLTYDLGFFLNISPDHIGVNEHPNFEDYLHCKLQLLVNSRKCIINAETDRFADVYAAATTTTNPDSIYLFARDGFENPDLKKPIDFRYKSVETDLAETKFTLTTASSKAHKLPISGEYTLQMIGDFNETNATGAIIGAGLAGMSYEDCAKGIRHVTIPGRMETVTTQKHGLIVVDYAHNKASMLALMRFMRREFTTPRVIVVVGAPGDKGISRRPGFSESLTAEADKAYLTTDDPGFENAQDICEEIDAGIDHSKCETVIELDREKAIKEAISEAGPDDVVLLCGKGADAFQKIRGVDTPYAGDIVIARQVIQELEK.

UDP-N-acetyl-alpha-D-muramoyl-L-alanyl-D-glutamate is bound at residue Ser-38. 116–122 (GTKGKTT) contacts ATP. Residues 162-163 (TT), Ser-189, and Arg-197 each bind UDP-N-acetyl-alpha-D-muramoyl-L-alanyl-D-glutamate. Lys-231 is modified (N6-carboxylysine).

It belongs to the MurCDEF family. MurE subfamily. In terms of processing, carboxylation is probably crucial for Mg(2+) binding and, consequently, for the gamma-phosphate positioning of ATP.

Its subcellular location is the cytoplasm. Its pathway is cell wall biogenesis; peptidoglycan biosynthesis. Catalyzes the addition of an amino acid to the nucleotide precursor UDP-N-acetylmuramoyl-L-alanyl-D-glutamate (UMAG) in the biosynthesis of bacterial cell-wall peptidoglycan. The chain is UDP-N-acetylmuramyl-tripeptide synthetase from Lactobacillus delbrueckii subsp. bulgaricus (strain ATCC 11842 / DSM 20081 / BCRC 10696 / JCM 1002 / NBRC 13953 / NCIMB 11778 / NCTC 12712 / WDCM 00102 / Lb 14).